The following is a 126-amino-acid chain: Small ribosomal subunit protein uS13 (126 aa).

The tract at residues 95–126 (GLPVRGQQTRTNARTRKGKRKTVGGTKKAKAK) is disordered. The segment covering 107–126 (ARTRKGKRKTVGGTKKAKAK) has biased composition (basic residues).

The protein belongs to the universal ribosomal protein uS13 family. As to quaternary structure, part of the 30S ribosomal subunit. Forms a loose heterodimer with protein S19. Forms two bridges to the 50S subunit in the 70S ribosome.

Located at the top of the head of the 30S subunit, it contacts several helices of the 16S rRNA. In the 70S ribosome it contacts the 23S rRNA (bridge B1a) and protein L5 of the 50S subunit (bridge B1b), connecting the 2 subunits; these bridges are implicated in subunit movement. Contacts the tRNAs in the A and P-sites. The chain is Small ribosomal subunit protein uS13 from Aquifex aeolicus (strain VF5).